The chain runs to 222 residues: Large ribosomal subunit protein mL64 (222 aa).

Disordered regions lie at residues 21–47 (RSRS…NLLT) and 186–222 (QRKR…EPSS). Positions 98-207 (TMQESLRLQQ…KKEARIAAMA (110 aa)) form a coiled coil. The short motif at 184–200 (KQQRKRLKEERQRQKKE) is the Nuclear localization signal element. The segment covering 186–202 (QRKRLKEERQRQKKEAR) has biased composition (basic and acidic residues). Low complexity predominate over residues 203-215 (IAAMASAEAQDSA).

It belongs to the mitochondrion-specific ribosomal protein mL64 family. As to quaternary structure, component of the mitochondrial ribosome large subunit (39S) which comprises a 16S rRNA and about 50 distinct proteins. Interacts with GADD45A, GADD45B and GADD45G. Interacts with NR4A1 via the NR4A1 AB domain. Interacts with ATAD3A and ATAD3B.

The protein localises to the mitochondrion. The protein resides in the nucleus. In terms of biological role, acts as a negative regulator of G1 to S cell cycle phase progression by inhibiting cyclin-dependent kinases. Inhibitory effects are additive with GADD45 proteins but also occur in the absence of GADD45 proteins. Acts as a repressor of the orphan nuclear receptor NR4A1 by inhibiting AB domain-mediated transcriptional activity. May be involved in the hormone-mediated regulation of NR4A1 transcriptional activity. May play a role in mitochondrial protein synthesis. This is Large ribosomal subunit protein mL64 (Gadd45gip1) from Mus musculus (Mouse).